Consider the following 43-residue polypeptide: Snake venom metalloproteinase crotalin (43 aa).

A Peptidase M12B domain is found at 1–43 (LLRRKSHDHAQNHDGDKCLRGASLGYYQSFLNQYKPQCILNKP). Position 13 (histidine 13) interacts with Zn(2+).

It belongs to the venom metalloproteinase (M12B) family. P-I subfamily. Monomer. It depends on Zn(2+) as a cofactor. This protein autoproteolytically degrades to 10 kDa and 14 kDa fragments in the presence of SDS. Interestingly, the two fragments, as well as reduced crotalin are able to bind vWF, indicating that the binding activity does not require a specific protein conformation. As to expression, expressed by the venom gland.

It is found in the secreted. In terms of biological role, snake venom zinc metalloproteinase that inhibits ristocin-induced platelet aggregation by abolishing the binding of von Willebrand factor (vWF) to platelet glycoprotein Ib alpha (GPIBA) through the cleavage of both GP1BA and vWF. Also has fibrinogenolytic activities by degrading the alpha- (FGA) and beta-chain (FGB) of fibrinogen. In vivo, induces a slight hemorrhage when applied to chick chorioallantoic membrane and has potent antithrombic effect. The polypeptide is Snake venom metalloproteinase crotalin (Crotalus atrox (Western diamondback rattlesnake)).